The following is a 423-amino-acid chain: UPF0229 protein VV2350 (423 aa).

A disordered region spans residues 81–111 (QFITGDKIERPKGGQGGGGAGDGDASADGEG). The segment covering 93–102 (GGQGGGGAGD) has biased composition (gly residues).

Belongs to the UPF0229 family.

The chain is UPF0229 protein VV2350 from Vibrio vulnificus (strain YJ016).